A 555-amino-acid chain; its full sequence is Benzoyl-CoA-dihydrodiol lyase (555 aa).

This sequence belongs to the benzoyl-CoA oxygenase component C family. As to quaternary structure, homodimer.

It catalyses the reaction 2,3-epoxy-2,3-dihydrobenzoyl-CoA + 2 H2O = (3Z)-6-oxohex-3-enoyl-CoA + formate + H(+). In terms of biological role, catalyzes the ring opening of 2,3-epoxy-2,3-dihydroxybenzoyl-CoA to form 3,4-didehydroadipyl-CoA semialdehyde. The sequence is that of Benzoyl-CoA-dihydrodiol lyase (boxC) from Aromatoleum evansii (Azoarcus evansii).